The following is a 162-amino-acid chain: Interleukin-15 (162 aa).

A signal peptide spans 1 to 29 (MRILKPYLRSTSIQCYLCLLLNSHFLTEA). Residues 30-48 (CIPVFILSCINAGLPKTEA) constitute a propeptide that is removed on maturation. 2 cysteine pairs are disulfide-bonded: C83–C133 and C90–C136. Residues N104 and N127 are each glycosylated (N-linked (GlcNAc...) asparagine).

This sequence belongs to the IL-15/IL-21 family.

The protein resides in the secreted. Its function is as follows. Cytokine that plays a major role in the development of inflammatory and protective immune responses to microbial invaders and parasites by modulating immune cells of both the innate and adaptive immune systems. Stimulates the proliferation of natural killer cells, T-cells and B-cells and promotes the secretion of several cytokines. In monocytes, induces the production of IL8 and monocyte chemotactic protein 1/CCL2, two chemokines that attract neutrophils and monocytes respectively to sites of infection. Unlike most cytokines, which are secreted in soluble form, IL15 is expressed in association with its high affinity IL15RA on the surface of IL15-producing cells and delivers signals to target cells that express IL2RB and IL2RG receptor subunits. Binding to its receptor triggers the phosphorylation of JAK1 and JAK3 and the recruitment and subsequent phosphorylation of signal transducer and activator of transcription-3/STAT3 and STAT5. In mast cells, induces the rapid tyrosine phosphorylation of STAT6 and thereby controls mast cell survival and release of cytokines such as IL4. The chain is Interleukin-15 (IL15) from Felis catus (Cat).